The chain runs to 415 residues: SVF1-like protein YDR222W (415 aa).

This sequence belongs to the SVF1 family.

The protein resides in the cytoplasm. In Saccharomyces cerevisiae (strain ATCC 204508 / S288c) (Baker's yeast), this protein is SVF1-like protein YDR222W.